A 311-amino-acid chain; its full sequence is Dihydroorotate dehydrogenase B (NAD(+)), catalytic subunit (311 aa).

Substrate contacts are provided by residues K52, 76 to 80 (NAMGL), and N133. Position 52-53 (52-53 (KS)) interacts with FMN. FMN is bound at residue N133. Residue C136 is the Nucleophile of the active site. 2 residues coordinate FMN: K171 and I197. 198–199 (NT) serves as a coordination point for substrate. FMN-binding positions include G223, 249 to 250 (GG), and 271 to 272 (GS).

This sequence belongs to the dihydroorotate dehydrogenase family. Type 1 subfamily. In terms of assembly, heterotetramer of 2 PyrK and 2 PyrD type B subunits. The cofactor is FMN.

The protein resides in the cytoplasm. The catalysed reaction is (S)-dihydroorotate + NAD(+) = orotate + NADH + H(+). Its pathway is pyrimidine metabolism; UMP biosynthesis via de novo pathway; orotate from (S)-dihydroorotate (NAD(+) route): step 1/1. Its function is as follows. Catalyzes the conversion of dihydroorotate to orotate with NAD(+) as electron acceptor. The sequence is that of Dihydroorotate dehydrogenase B (NAD(+)), catalytic subunit (pyrD) from Methanosarcina acetivorans (strain ATCC 35395 / DSM 2834 / JCM 12185 / C2A).